The chain runs to 454 residues: Replicative DNA helicase DnaC (454 aa).

The SF4 helicase domain maps to 179 to 445 (RKGDITGIPT…NKFVNLERRF (267 aa)). 210–217 (ARPSVGKT) contacts ATP.

This sequence belongs to the helicase family. DnaB subfamily. As to quaternary structure, the DNA replisome assembles sequentially on oriC in this order; DnaA, DnaD, DnaB, DnaI-DnaC helicase. Monomer in the absence of ATP, in its presence forms a probable homohexamer which is not active as a helicase in vitro. Interacts separately and simultaneously with helicase loaders DnaB and DnaI. Interaction with DnaB does not require ATP. Interaction with DnaI requires ATP, probably forms a DnaC(6):DnaI(6) complex, which is not active as a helicase.

It localises to the cytoplasm. The protein localises to the nucleoid. The catalysed reaction is Couples ATP hydrolysis with the unwinding of duplex DNA at the replication fork by translocating in the 5'-3' direction. This creates two antiparallel DNA single strands (ssDNA). The leading ssDNA polymer is the template for DNA polymerase III holoenzyme which synthesizes a continuous strand.. It catalyses the reaction ATP + H2O = ADP + phosphate + H(+). In terms of biological role, the main replicative DNA helicase, it participates in initiation and elongation during chromosome replication. Travels ahead of the DNA replisome, separating dsDNA into templates for DNA synthesis. The monomer has helicase activity in the presence of DnaI which is further increased by DnaB; the purified oligomeric form (probably a DnaC hexamer) does not have helicase activity in vitro, nor does the DnaC(6):DnaI(6) complex. The direction was not determined but is probably 5'-3'. Helicase activity requires an rNTP and is inactive with dNTPs. Has weak ATPase activity as a monomer, as an oligomer has ATPase activity which is stimulated by single-stranded (ss)DNA and further stimulated by DnaI and more by DnaB. Functionally, deletion of a single T residue in the promoter region (a run of 8 Ts becomes 7 Ts) decreases the helicase levels by 50%, decreasing DNA replication inititation during fast growth in rich medium. Suppresses the synthetic lethality of a dnaA1-yabA deletion for growth on rich medium. This chain is Replicative DNA helicase DnaC, found in Bacillus subtilis (strain 168).